A 503-amino-acid chain; its full sequence is WAS/WASL-interacting protein family member 1 (503 aa).

Residues 1–14 show a composition bias toward pro residues; sequence MPVPPPPAPPPPPT. A disordered region spans residues 1-503; that stretch reads MPVPPPPAPP…GAPPLPPIPR (503 aa). A compositionally biased stretch (polar residues) spans 21–31; sequence EKPTLNKTEQA. Residues 32–49 enclose the WH2 domain; sequence GRNALLSDISKGKKLKKT. The residue at position 33 (R33) is an Asymmetric dimethylarginine. Residues 45 to 48 are binds actin; that stretch reads KLKK. Gly residues predominate over residues 65–104; that stretch reads AGAGGGGGGFGGGGGFGGGGGGGGGGSFGGGGPPGLGGLF. Over residues 121–137 the composition is skewed to low complexity; that stretch reads SGGSRPPLLPPGGRSTS. An omega-N-methylarginine mark is found at R125 and R134. Pro residues-rich tracts occupy residues 141-154, 161-174, 182-191, and 204-223; these read FSPPSGPGRFPVPS, PPEPQRNRMPPPRP, SIPPPVPSTP, and PPVPGGPRQPSPGPTPPPFP. Residue S142 is modified to Phosphoserine. At S234 the chain carries Phosphoserine. The segment covering 238 to 247 has biased composition (low complexity); it reads SPLSSSSPFS. Pro residues-rich tracts occupy residues 282-298 and 306-323; these read VPPPPPQNNKPPVPSTP and APPPPPPPSRPGPPPLPP. A Phosphoserine modification is found at S340. Residue T345 is modified to Phosphothreonine. Residues 346 to 371 are compositionally biased toward pro residues; that stretch reads PPLPSPGRSGPLPPPPSERPPPPVRD. The residue at position 350 (S350) is a Phosphoserine. 3 XRSGPXPPXP motif repeats span residues 352–361, 374–383, and 410–419; these read GRSGPLPPPP and PRSGPRPPLP. Over residues 413–434 the composition is skewed to pro residues; sequence GPRPPLPPDRPSAGAPPPPPPS. Over residues 480 to 494 the composition is skewed to basic and acidic residues; the sequence is ARNESRSGSNRRERG.

It belongs to the verprolin family. In terms of assembly, binds to WAS, profilin and actin. Binds to WASL. Interacts with DBNL. Interacts with FNBP1L (via the SH3 domain). In terms of tissue distribution, highly expressed in peripheral blood mononuclear cells, spleen, placenta, small intestine, colon and thymus. Lower expression in ovary, heart, brain, lung, liver, skeletal muscle, kidney, pancreas, prostate and testis.

The protein localises to the cytoplasmic vesicle. The protein resides in the cytoplasm. It localises to the cytoskeleton. It is found in the cell projection. Its subcellular location is the ruffle. Functionally, plays a role in the reorganization of the actin cytoskeleton. Contributes with NCK1 and GRB2 in the recruitment and activation of WASL. May participate in regulating the subcellular localization of WASL, resulting in the disassembly of stress fibers in favor of filopodia formation. Plays a role in the formation of cell ruffles. Plays an important role in the intracellular motility of vaccinia virus by functioning as an adapter for recruiting WASL to vaccinia virus. The sequence is that of WAS/WASL-interacting protein family member 1 (WIPF1) from Homo sapiens (Human).